The sequence spans 88 residues: MDKVYKRSWFQTFLAFLVSQLYFNFVELTGWGPKYREMNGFPANIVELDFFQTYLSFYDNPWFNIITVFLGVFTIIQIITGITKDIRN.

Transmembrane regions (helical) follow at residues 13–33 (FLAF…GWGP) and 62–82 (WFNI…ITGI).

Its subcellular location is the cell membrane. This is an uncharacterized protein from Bacillus subtilis (strain 168).